A 112-amino-acid polypeptide reads, in one-letter code: MLDELDGAMIISKTLTKTDIVGNVALPKAQVMSVLTRMNGVTDEGLDNGFEVQVHDIMEDDLYTVTLKRIDDMKYYFGTGWSTMKHSLDLVEGDVLKLYWDQFENKFIVLNF.

The segment at residues 19–112 is a DNA-binding region (TF-B3); that stretch reads DIVGNVALPK…FENKFIVLNF (94 aa).

The protein localises to the nucleus. This is B3 domain-containing protein At1g43171 from Arabidopsis thaliana (Mouse-ear cress).